Reading from the N-terminus, the 142-residue chain is Small ribosomal subunit protein uS9c (142 aa).

It belongs to the universal ribosomal protein uS9 family.

Its subcellular location is the plastid. The protein resides in the chloroplast. The sequence is that of Small ribosomal subunit protein uS9c (rps9) from Stigeoclonium helveticum (Green alga).